The following is a 477-amino-acid chain: Asparaginyl-tRNA synthetase (477 aa).

A mitochondrion-targeting transit peptide spans M1–C14. K353 carries the N6-acetyllysine modification.

It belongs to the class-II aminoacyl-tRNA synthetase family. In terms of assembly, homodimer.

The protein localises to the mitochondrion matrix. The protein resides in the mitochondrion. It catalyses the reaction tRNA(Asn) + L-asparagine + ATP = L-asparaginyl-tRNA(Asn) + AMP + diphosphate + H(+). Its function is as follows. Mitochondrial aminoacyl-tRNA synthetase that catalyzes the specific attachment of the asparagine amino acid (aa) to the homologous transfer RNA (tRNA), further participating in protein synthesis. The reaction occurs in a two steps: asparagine is first activated by ATP to form Asn-AMP and then transferred to the acceptor end of tRNA(Asn). The protein is Asparaginyl-tRNA synthetase of Homo sapiens (Human).